The sequence spans 189 residues: uncharacterized protein (189 aa).

Belongs to the isochorismatase family.

This is an uncharacterized protein from Bacillus subtilis (strain 168).